Consider the following 372-residue polypeptide: Cytochrome b (372 aa).

Transmembrane regions (helical) follow at residues 25 to 45, 69 to 90, 105 to 125, and 170 to 190; these read FGSM…FLAV, WMMQ…YIHM, WLSG…GYVL, and FFAL…LHIM. The heme b site is built by His75 and His89. Heme b-binding residues include His174 and His188. Residue His193 coordinates a ubiquinone. The next 4 membrane-spanning stretches (helical) occupy residues 218-238, 280-300, 312-332, and 339-358; these read YKDL…ISFL, LGGA…PFTH, FMQL…WTAT, and YTTI…MSNL.

Belongs to the cytochrome b family. In terms of assembly, the cytochrome bc1 complex contains 3 respiratory subunits (MT-CYB, CYC1 and UQCRFS1), 2 core proteins (UQCRC1 and UQCRC2) and probably 6 low-molecular weight proteins. Requires heme b as cofactor.

It localises to the mitochondrion inner membrane. Functionally, component of the ubiquinol-cytochrome c reductase complex (complex III or cytochrome b-c1 complex) that is part of the mitochondrial respiratory chain. The b-c1 complex mediates electron transfer from ubiquinol to cytochrome c. Contributes to the generation of a proton gradient across the mitochondrial membrane that is then used for ATP synthesis. This Sanzinia madagascariensis (Madagascar tree boa) protein is Cytochrome b (MT-CYB).